The following is a 686-amino-acid chain: Mannan-binding lectin serine protease 2 (686 aa).

A signal peptide spans 1–15; the sequence is MRLLTLLGLLCGSVA. A CUB 1 domain is found at 16 to 137; sequence TPLGPKWPEP…TGFEAFYAAE (122 aa). Residues Glu67, Asp75, Asp120, Ser122, Asn123, Asp138, Ile139, and Glu141 each coordinate Ca(2+). A disulfide bond links Cys72 and Cys90. An EGF-like; calcium-binding domain is found at 138 to 181; sequence DIDECQVAPGEAPTCDHHCHNHLGGFYCSCRAGYVLHRNKRTCS. 12 disulfide bridges follow: Cys142-Cys156, Cys152-Cys165, Cys167-Cys180, Cys184-Cys211, Cys241-Cys259, Cys300-Cys348, Cys328-Cys361, Cys366-Cys412, Cys396-Cys430, Cys434-Cys552, Cys598-Cys618, and Cys629-Cys660. 3 residues coordinate Ca(2+): Asn158, His159, and Gly162. Asn158 bears the (3R)-3-hydroxyasparagine mark. A CUB 2 domain is found at 184–296; it reads CSGQVFTQRS…TGWKIHYTST (113 aa). Sushi domains are found at residues 298 to 363 and 364 to 432; these read QPCP…ACSI and VDCG…VCEP. A Peptidase S1 domain is found at 445-684; that stretch reads IYGGQKAKPG…YIPWIENIIS (240 aa). Catalysis depends on charge relay system residues His483 and Asp532. Residue Ser633 is the Charge relay system of the active site.

It belongs to the peptidase S1 family. In terms of assembly, homodimer; disulfide-linked. Binds MBL2. Isoform 2 binds to MASP1. Binds SERPING1. Dimerization and MBL2 binding requires calcium ions. Post-translationally, the iron and 2-oxoglutarate dependent 3-hydroxylation of aspartate and asparagine is (R) stereospecific within EGF domains. In terms of processing, activated by cleavage after Arg-444. The uncleaved zymogen is inactive towards synthetic substrates, but has sufficient activity to effect autocatalytic cleavage. As to expression, plasma.

Its subcellular location is the secreted. It carries out the reaction Selective cleavage after Arg-223 in complement component C2 (-Ser-Leu-Gly-Arg-|-Lys-Ile-Gln-Ile) and after Arg-76 in complement component C4 (-Gly-Leu-Gln-Arg-|-Ala-Leu-Glu-Ile).. Its function is as follows. Serum protease that plays an important role in the activation of the complement system via mannose-binding lectin. After activation by auto-catalytic cleavage it cleaves C2 and C4, leading to their activation and to the formation of C3 convertase. The chain is Mannan-binding lectin serine protease 2 (MASP2) from Homo sapiens (Human).